A 383-amino-acid polypeptide reads, in one-letter code: Protein COS5 (383 aa).

Topologically, residues 1-42 (MKENELKNEKSVDVLSFKQLESQKIVLPQDLFRSSFTWFCYE) are cytoplasmic. Residues 43–63 (IYKSLAFPIWMLLWLPLSVWW) traverse the membrane as a helical segment. Over 64–72 (KLSNNCIYP) the chain is Extracellular. The helical transmembrane segment at 73 to 93 (LIVSLLVLFLGPIFVLVICGL) threads the bilayer. Residues 94–232 (SRKRSLSKQL…RSKLTWFLKR (139 aa)) are Cytoplasmic-facing. A helical transmembrane segment spans residues 233–253 (IFTIYSLPLWLAFLNCICVSQ). Residue His254 is a topological domain, extracellular. A helical membrane pass occupies residues 255 to 275 (FCLAFRILCPGLFFLMMVWLF). Residues 276 to 383 (QNMRTTALLV…SRNEESLMKK (108 aa)) are Cytoplasmic-facing.

This sequence belongs to the DUP/COS family.

The protein resides in the membrane. The protein is Protein COS5 (COS5) of Saccharomyces cerevisiae (strain ATCC 204508 / S288c) (Baker's yeast).